A 277-amino-acid polypeptide reads, in one-letter code: Cis-2,3-dihydrobiphenyl-2,3-diol dehydrogenase (277 aa).

NAD(+) is bound by residues 9–36 (LITG…AVLD) and aspartate 59. Residue serine 142 participates in substrate binding. The Proton acceptor role is filled by tyrosine 155. Lysine 159 is an NAD(+) binding site.

Belongs to the short-chain dehydrogenases/reductases (SDR) family.

The enzyme catalyses (2R,3S)-3-phenylcyclohexa-3,5-diene-1,2-diol + NAD(+) = biphenyl-2,3-diol + NADH + H(+). It participates in xenobiotic degradation; biphenyl degradation; 2-hydroxy-2,4-pentadienoate and benzoate from biphenyl: step 2/4. This chain is Cis-2,3-dihydrobiphenyl-2,3-diol dehydrogenase (bphB), found in Paraburkholderia xenovorans (strain LB400).